The following is a 500-amino-acid chain: NAD(P)H-quinone oxidoreductase subunit 2 A, chloroplastic (500 aa).

Helical transmembrane passes span 14-34 (LLLF…GLIL), 47-67 (IPWF…ALLF), 89-109 (IFQF…VEYI), 114-134 (MAIT…MFLC), 139-159 (FITI…LSGY), 173-193 (YLLM…WLYG), 217-237 (PGIS…LSPA), 285-305 (WHLL…LIAI), 313-333 (MLAY…IVGD), 344-364 (YMLF…LFGL), 385-405 (ALSL…AGFF), 408-428 (LHLF…IGLL), and 474-494 (MIVC…IIAI).

Belongs to the complex I subunit 2 family. As to quaternary structure, NDH is composed of at least 16 different subunits, 5 of which are encoded in the nucleus.

It is found in the plastid. The protein localises to the chloroplast thylakoid membrane. The enzyme catalyses a plastoquinone + NADH + (n+1) H(+)(in) = a plastoquinol + NAD(+) + n H(+)(out). The catalysed reaction is a plastoquinone + NADPH + (n+1) H(+)(in) = a plastoquinol + NADP(+) + n H(+)(out). In terms of biological role, NDH shuttles electrons from NAD(P)H:plastoquinone, via FMN and iron-sulfur (Fe-S) centers, to quinones in the photosynthetic chain and possibly in a chloroplast respiratory chain. The immediate electron acceptor for the enzyme in this species is believed to be plastoquinone. Couples the redox reaction to proton translocation, and thus conserves the redox energy in a proton gradient. In Pelargonium hortorum (Common geranium), this protein is NAD(P)H-quinone oxidoreductase subunit 2 A, chloroplastic.